We begin with the raw amino-acid sequence, 123 residues long: Large ribosomal subunit protein eL8 (123 aa).

Belongs to the eukaryotic ribosomal protein eL8 family. As to quaternary structure, part of the 50S ribosomal subunit. Probably part of the RNase P complex.

It localises to the cytoplasm. Its function is as follows. Multifunctional RNA-binding protein that recognizes the K-turn motif in ribosomal RNA, the RNA component of RNase P, box H/ACA, box C/D and box C'/D' sRNAs. This is Large ribosomal subunit protein eL8 from Methanopyrus kandleri (strain AV19 / DSM 6324 / JCM 9639 / NBRC 100938).